A 497-amino-acid chain; its full sequence is Galactose/methyl galactoside import ATP-binding protein MglA 1 (497 aa).

ABC transporter domains lie at 6-243 (LEMR…VGRD) and 256-494 (GKVR…VMSM). 38-45 (GENGAGKS) contributes to the ATP binding site.

The protein belongs to the ABC transporter superfamily. Galactose/methyl galactoside importer (TC 3.A.1.2.3) family. As to quaternary structure, the complex is composed of one ATP-binding protein (MglA), two transmembrane proteins (MglC) and a solute-binding protein (MglB).

Its subcellular location is the cell inner membrane. It carries out the reaction D-galactose(out) + ATP + H2O = D-galactose(in) + ADP + phosphate + H(+). The catalysed reaction is methyl beta-D-galactoside(out) + ATP + H2O = methyl beta-D-galactoside(in) + ADP + phosphate + H(+). Functionally, part of the ABC transporter complex MglABC involved in galactose/methyl galactoside import. Responsible for energy coupling to the transport system. The chain is Galactose/methyl galactoside import ATP-binding protein MglA 1 from Photobacterium profundum (strain SS9).